Consider the following 106-residue polypeptide: YcgL domain-containing protein PsycPRwf_1721 (106 aa).

Positions 1–94 (MHCDIYKFPK…PSDVLLAQAQ (94 aa)) constitute a YcgL domain.

This chain is YcgL domain-containing protein PsycPRwf_1721, found in Psychrobacter sp. (strain PRwf-1).